The following is a 331-amino-acid chain: 2-isopropylmalate synthase (331 aa).

The region spanning 1 to 80 is the Pyruvate carboxyltransferase domain; sequence RDEVVRGRDV…YTRINTREIY (80 aa). 3 residues coordinate Mn(2+): His15, His17, and Asn51. The segment at 205-331 is regulatory domain; the sequence is QLEHVQFFSG…PSIEEVHRGV (127 aa).

Belongs to the alpha-IPM synthase/homocitrate synthase family. LeuA type 1 subfamily. In terms of assembly, homotetramer. It depends on Mn(2+) as a cofactor.

It localises to the cytoplasm. The enzyme catalyses 3-methyl-2-oxobutanoate + acetyl-CoA + H2O = (2S)-2-isopropylmalate + CoA + H(+). It functions in the pathway amino-acid biosynthesis; L-leucine biosynthesis; L-leucine from 3-methyl-2-oxobutanoate: step 1/4. In terms of biological role, catalyzes the condensation of the acetyl group of acetyl-CoA with 3-methyl-2-oxobutanoate (2-oxoisovalerate) to form 3-carboxy-3-hydroxy-4-methylpentanoate (2-isopropylmalate). The protein is 2-isopropylmalate synthase of Thermus thermophilus.